We begin with the raw amino-acid sequence, 152 residues long: UPF0756 membrane protein EF_1246 (152 aa).

Transmembrane regions (helical) follow at residues W4–I24, L52–L72, W85–I105, and L115–I135.

Belongs to the UPF0756 family.

The protein resides in the cell membrane. The chain is UPF0756 membrane protein EF_1246 from Enterococcus faecalis (strain ATCC 700802 / V583).